Reading from the N-terminus, the 296-residue chain is Probable deoxyuridine 5'-triphosphate nucleotidohydrolase (296 aa).

A coiled-coil region spans residues 66 to 102 (EIDKNIVKNLEDKVNCLEQDVQYLKNELKKKDADWQQ).

Belongs to the dUTPase family.

The catalysed reaction is dUTP + H2O = dUMP + diphosphate + H(+). It participates in pyrimidine metabolism; dUMP biosynthesis; dUMP from dCTP (dUTP route): step 2/2. This enzyme is involved in nucleotide metabolism: it produces dUMP, the immediate precursor of thymidine nucleotides and it decreases the intracellular concentration of dUTP so that uracil cannot be incorporated into DNA. The protein is Probable deoxyuridine 5'-triphosphate nucleotidohydrolase of Acheta domesticus (House cricket).